The sequence spans 172 residues: Signal peptidase complex catalytic subunit SEC11 (172 aa).

Topologically, residues 1–14 (MLSSLGNPRQAAAQ) are cytoplasmic. Residues 15–35 (LMNFALILSTAFMMWKGLSVI) form a helical; Signal-anchor for type II membrane protein membrane-spanning segment. At 36–172 (TDSPSPIVVV…MGLLVVLQRE (137 aa)) the chain is on the lumenal side. Active-site charge relay system residues include Ser-49 and His-90. An N-linked (GlcNAc...) asparagine glycan is attached at Asn-111. The active-site Charge relay system is Asp-115. The segment at 158–169 (VMLGIMGLLVVL) is C-terminal short (CTS) helix.

The protein belongs to the peptidase S26B family. As to quaternary structure, component of the signal peptidase complex (SPC) composed of a catalytic subunit SEC11 and three accessory subunits SPC1, SPC2 and SPC3. The complex induces a local thinning of the ER membrane which is used to measure the length of the signal peptide (SP) h-region of protein substrates. This ensures the selectivity of the complex towards h-regions shorter than 18-20 amino acids. SPC associates with the translocon complex.

It is found in the endoplasmic reticulum membrane. It catalyses the reaction Cleavage of hydrophobic, N-terminal signal or leader sequences from secreted and periplasmic proteins.. Functionally, catalytic component of the signal peptidase complex (SPC) which catalyzes the cleavage of N-terminal signal sequences from nascent proteins as they are translocated into the lumen of the endoplasmic reticulum. Specifically cleaves N-terminal signal peptides that contain a hydrophobic alpha-helix (h-region) shorter than 18-20 amino acids. The chain is Signal peptidase complex catalytic subunit SEC11 (SEC11) from Fusarium vanettenii (strain ATCC MYA-4622 / CBS 123669 / FGSC 9596 / NRRL 45880 / 77-13-4) (Fusarium solani subsp. pisi).